The primary structure comprises 374 residues: NAD-capped RNA hydrolase ndx-9 (374 aa).

4 residues coordinate Zn(2+): C181, C184, C199, and C202. Substrate contacts are provided by residues Y207, A243–F245, E259, E263, and E307. The Nudix hydrolase domain occupies P208–P336. Residues A243, E259, E263, and E307 each contribute to the Mg(2+) site. Positions G244–G265 match the Nudix box motif. The Microbody targeting signal signature appears at L367–N369.

The protein belongs to the Nudix hydrolase family. NudC subfamily. Homodimer. Mg(2+) is required as a cofactor. Mn(2+) serves as cofactor. The cofactor is Zn(2+).

It catalyses the reaction a 5'-end NAD(+)-phospho-ribonucleoside in mRNA + H2O = a 5'-end phospho-adenosine-phospho-ribonucleoside in mRNA + beta-nicotinamide D-ribonucleotide + 2 H(+). The catalysed reaction is NAD(+) + H2O = beta-nicotinamide D-ribonucleotide + AMP + 2 H(+). The enzyme catalyses NADH + H2O = reduced beta-nicotinamide D-ribonucleotide + AMP + 2 H(+). Functionally, mRNA decapping enzyme that specifically removes the nicotinamide adenine dinucleotide (NAD) cap from a subset of mRNAs by hydrolyzing the diphosphate linkage to produce nicotinamide mononucleotide (NMN) and 5' monophosphate mRNA. The NAD-cap is present at the 5'-end of some RNAs; in contrast to the canonical N7 methylguanosine (m7G) cap, the NAD cap promotes mRNA decay. Mediates the hydrolysis of some nucleoside diphosphate derivatives. This is NAD-capped RNA hydrolase ndx-9 (ndx-9) from Caenorhabditis elegans.